Here is a 348-residue protein sequence, read N- to C-terminus: Dihydroorotase (348 aa).

Residues histidine 17 and histidine 19 each coordinate Zn(2+). Substrate contacts are provided by residues 19 to 21 (HLR) and asparagine 45. Lysine 103, histidine 140, and histidine 178 together coordinate Zn(2+). Residue lysine 103 is modified to N6-carboxylysine. A substrate-binding site is contributed by histidine 140. Leucine 223 lines the substrate pocket. Residue aspartate 251 participates in Zn(2+) binding. Residue aspartate 251 is part of the active site. Residues histidine 255 and alanine 267 each coordinate substrate.

This sequence belongs to the metallo-dependent hydrolases superfamily. DHOase family. Class II DHOase subfamily. As to quaternary structure, homodimer. Zn(2+) is required as a cofactor.

The enzyme catalyses (S)-dihydroorotate + H2O = N-carbamoyl-L-aspartate + H(+). It participates in pyrimidine metabolism; UMP biosynthesis via de novo pathway; (S)-dihydroorotate from bicarbonate: step 3/3. Catalyzes the reversible cyclization of carbamoyl aspartate to dihydroorotate. The chain is Dihydroorotase from Escherichia coli O6:K15:H31 (strain 536 / UPEC).